The sequence spans 346 residues: Protein RecA (346 aa).

66–73 (GPESSGKT) lines the ATP pocket.

The protein belongs to the RecA family.

The protein resides in the cytoplasm. Its function is as follows. Can catalyze the hydrolysis of ATP in the presence of single-stranded DNA, the ATP-dependent uptake of single-stranded DNA by duplex DNA, and the ATP-dependent hybridization of homologous single-stranded DNAs. It interacts with LexA causing its activation and leading to its autocatalytic cleavage. The sequence is that of Protein RecA from Aromatoleum aromaticum (strain DSM 19018 / LMG 30748 / EbN1) (Azoarcus sp. (strain EbN1)).